We begin with the raw amino-acid sequence, 458 residues long: Glutamyl-tRNA reductase (458 aa).

Substrate contacts are provided by residues T49–R52, S109, E114–Q116, and Q120. C50 acts as the Nucleophile in catalysis. G191 to A196 is an NADP(+) binding site.

It belongs to the glutamyl-tRNA reductase family. In terms of assembly, homodimer.

It catalyses the reaction (S)-4-amino-5-oxopentanoate + tRNA(Glu) + NADP(+) = L-glutamyl-tRNA(Glu) + NADPH + H(+). It participates in porphyrin-containing compound metabolism; protoporphyrin-IX biosynthesis; 5-aminolevulinate from L-glutamyl-tRNA(Glu): step 1/2. Catalyzes the NADPH-dependent reduction of glutamyl-tRNA(Glu) to glutamate 1-semialdehyde (GSA). This Corynebacterium aurimucosum (strain ATCC 700975 / DSM 44827 / CIP 107346 / CN-1) (Corynebacterium nigricans) protein is Glutamyl-tRNA reductase.